We begin with the raw amino-acid sequence, 217 residues long: Guanylate kinase (217 aa).

The Guanylate kinase-like domain maps to 10–190 (GLLIILSSPS…TEEALKTIIT (181 aa)). Position 17–24 (17–24 (SPSGAGKS)) interacts with ATP.

The protein belongs to the guanylate kinase family.

It is found in the cytoplasm. The enzyme catalyses GMP + ATP = GDP + ADP. Its function is as follows. Essential for recycling GMP and indirectly, cGMP. The protein is Guanylate kinase of Ruegeria sp. (strain TM1040) (Silicibacter sp.).